The primary structure comprises 503 residues: Probable cytosol aminopeptidase (503 aa).

Mn(2+)-binding residues include Lys274 and Asp279. Lys286 is an active-site residue. The Mn(2+) site is built by Asp297, Asp356, and Glu358. The active site involves Arg360.

The protein belongs to the peptidase M17 family. Mn(2+) serves as cofactor.

It localises to the cytoplasm. It carries out the reaction Release of an N-terminal amino acid, Xaa-|-Yaa-, in which Xaa is preferably Leu, but may be other amino acids including Pro although not Arg or Lys, and Yaa may be Pro. Amino acid amides and methyl esters are also readily hydrolyzed, but rates on arylamides are exceedingly low.. The catalysed reaction is Release of an N-terminal amino acid, preferentially leucine, but not glutamic or aspartic acids.. Its function is as follows. Presumably involved in the processing and regular turnover of intracellular proteins. Catalyzes the removal of unsubstituted N-terminal amino acids from various peptides. The polypeptide is Probable cytosol aminopeptidase (Burkholderia thailandensis (strain ATCC 700388 / DSM 13276 / CCUG 48851 / CIP 106301 / E264)).